Here is a 117-residue protein sequence, read N- to C-terminus: uncharacterized protein (117 aa).

This sequence to H.influenzae HI_1162 and to HI_0925.

This is an uncharacterized protein from Escherichia coli (strain K12).